The chain runs to 158 residues: Placenta growth factor (158 aa).

The or 26 signal peptide spans 1–23 (MLAMKLFTCFLQVLAGLAVHSQG). 2 N-linked (GlcNAc...) asparagine glycosylation sites follow: Asn-29 and Asn-30. 3 cysteine pairs are disulfide-bonded: Cys-48–Cys-90, Cys-79–Cys-125, and Cys-83–Cys-127. N-linked (GlcNAc...) asparagine glycosylation occurs at Asn-97. Residues 136–158 (AERRKTKGKRKQSKTPQTEEPHL) are disordered. Basic residues predominate over residues 137–148 (ERRKTKGKRKQS).

This sequence belongs to the PDGF/VEGF growth factor family. As to quaternary structure, antiparallel homodimer; disulfide-linked. Also found as heterodimer with VEGFA/VEGF.

The protein resides in the secreted. In terms of biological role, growth factor active in angiogenesis and endothelial cell growth, stimulating their proliferation and migration. It binds to the receptor FLT1/VEGFR-1. Also promotes cell tumor growth. The polypeptide is Placenta growth factor (Pgf) (Rattus norvegicus (Rat)).